Here is a 352-residue protein sequence, read N- to C-terminus: Chorismate synthase (352 aa).

An NADP(+)-binding site is contributed by Arg-48. FMN-binding positions include 125–127 (RSS), 237–238 (NA), Gly-278, 293–297 (KPTSS), and Arg-319.

The protein belongs to the chorismate synthase family. In terms of assembly, homotetramer. It depends on FMNH2 as a cofactor.

It catalyses the reaction 5-O-(1-carboxyvinyl)-3-phosphoshikimate = chorismate + phosphate. It functions in the pathway metabolic intermediate biosynthesis; chorismate biosynthesis; chorismate from D-erythrose 4-phosphate and phosphoenolpyruvate: step 7/7. Catalyzes the anti-1,4-elimination of the C-3 phosphate and the C-6 proR hydrogen from 5-enolpyruvylshikimate-3-phosphate (EPSP) to yield chorismate, which is the branch point compound that serves as the starting substrate for the three terminal pathways of aromatic amino acid biosynthesis. This reaction introduces a second double bond into the aromatic ring system. The polypeptide is Chorismate synthase (Francisella tularensis subsp. tularensis (strain FSC 198)).